The chain runs to 309 residues: MDDKTFTKELDQWVEQLNECKQLNENQVRTLCEKAKEILTKESNVQEVRCPVTVCGDVHGQFHDLMELFRIGGKSPDTNYLFMGDYVDRGYYSVETVTLLVALKVRYPERITILRGNHESRQITQVYGFYDECLRKYGNANVWKYFTDLFDYLPLTALVDGQIFCLHGGLSPSIDTLDHIRALDRLQEVPHEGPMCDLLWSDPDDRGGWGISPRGAGYTFGQDISETFNHANGLTLVSRAHQLVMEGYNWCHDRNVVTIFSAPNYCYRCGNQAAIMELDDTLKYSFLQFDPAPRRGEPHVTRRTPDYFL.

Mn(2+) is bound by residues aspartate 57, histidine 59, aspartate 85, and asparagine 117. The Proton donor role is filled by histidine 118. Residues histidine 167 and histidine 241 each contribute to the Mn(2+) site. Tyrosine 307 is modified (phosphotyrosine). Leucine 309 is subject to Leucine methyl ester.

This sequence belongs to the PPP phosphatase family. PP-1 subfamily. As to quaternary structure, found in a complex with at least ARL2, PPP2CB, PPP2R1A, PPP2R2A, PPP2R5E and TBCD. Interacts with TBCD. PP2A consists of a common heterodimeric core enzyme (composed of a 36 kDa catalytic subunit (subunit C) and a 65 kDa constant regulatory subunit (PR65) (subunit A)) that associates with a variety of regulatory subunits. Proteins that associate with the core dimer include three families of regulatory subunits B (the R2/B/PR55/B55, R3/B''/PR72/PR130/PR59 and R5/B'/B56 families), the 48 kDa variable regulatory subunit, viral proteins, and cell signaling molecules. Binds PPME1. May indirectly interact with SGO1, most probably through regulatory B56 subunits. Interacts with CTTNBP2NL. Interacts with PTPA. Part of the core of STRIPAK complexes composed of PP2A catalytic and scaffolding subunits, the striatins (PP2A regulatory subunits), the striatin-associated proteins MOB4, STRIP1 and STRIP2, PDCD10 and members of the STE20 kinases, such as STK24 and STK26. Requires Mn(2+) as cofactor. Post-translationally, reversibly methyl esterified on Leu-309 by leucine carboxyl methyltransferase 1 (Lcmt1) and protein phosphatase methylesterase 1 (PPME1). Carboxyl methylation influences the affinity of the catalytic subunit for the different regulatory subunits, thereby modulating the PP2A holoenzyme's substrate specificity, enzyme activity and cellular localization. In terms of processing, phosphorylation of either threonine (by autophosphorylation-activated protein kinase) or tyrosine results in inactivation of the phosphatase. Auto-dephosphorylation has been suggested as a mechanism for reactivation. May be monoubiquitinated by NOSIP.

The protein resides in the cytoplasm. It localises to the nucleus. The protein localises to the chromosome. It is found in the centromere. Its subcellular location is the cytoskeleton. The protein resides in the spindle pole. The catalysed reaction is O-phospho-L-seryl-[protein] + H2O = L-seryl-[protein] + phosphate. The enzyme catalyses O-phospho-L-threonyl-[protein] + H2O = L-threonyl-[protein] + phosphate. Functionally, catalytic subunit of protein phosphatase 2A (PP2A), a serine/threonine phosphatase involved in the regulation of a wide variety of enzymes, signal transduction pathways, and cellular events. PP2A can modulate the activity of phosphorylase B kinase, casein kinase 2, mitogen-stimulated S6 kinase, and MAP-2 kinase. Part of the striatin-interacting phosphatase and kinase (STRIPAK) complexes. STRIPAK complexes have critical roles in protein (de)phosphorylation and are regulators of multiple signaling pathways including Hippo, MAPK, nuclear receptor and cytoskeleton remodeling. Different types of STRIPAK complexes are involved in a variety of biological processes such as cell growth, differentiation, apoptosis, metabolism and immune regulation. This is Serine/threonine-protein phosphatase 2A catalytic subunit beta isoform (PPP2CB) from Oryctolagus cuniculus (Rabbit).